A 117-amino-acid polypeptide reads, in one-letter code: Large ribosomal subunit protein bL19 (117 aa).

Belongs to the bacterial ribosomal protein bL19 family.

This protein is located at the 30S-50S ribosomal subunit interface and may play a role in the structure and function of the aminoacyl-tRNA binding site. The chain is Large ribosomal subunit protein bL19 from Shewanella piezotolerans (strain WP3 / JCM 13877).